Reading from the N-terminus, the 113-residue chain is Iron-sulfur cluster insertion protein ErpA (113 aa).

Residues cysteine 41, cysteine 105, and cysteine 107 each contribute to the iron-sulfur cluster site.

It belongs to the HesB/IscA family. In terms of assembly, homodimer. Iron-sulfur cluster is required as a cofactor.

In terms of biological role, required for insertion of 4Fe-4S clusters for at least IspG. In Vibrio vulnificus (strain YJ016), this protein is Iron-sulfur cluster insertion protein ErpA.